Consider the following 400-residue polypeptide: Small ribosomal subunit protein bS1 (400 aa).

4 consecutive S1 motif domains span residues 17–87 (GDVV…VTYL), 107–173 (EEVV…LSRR), 194–262 (GDVV…LSLK), and 279–348 (GDVV…LSIK). A compositionally biased stretch (basic and acidic residues) spans 351-366 (EERPAQEEGQKEEKRA). Positions 351-400 (EERPAQEEGQKEEKRAARPRRPRRQEKRDFELPETQTGFSMADLFGDIEL) are disordered.

It belongs to the bacterial ribosomal protein bS1 family. In terms of processing, phosphorylated.

Functionally, binds mRNA; thus facilitating recognition of the initiation point. It is needed to translate mRNA with a short Shine-Dalgarno (SD) purine-rich sequence. The polypeptide is Small ribosomal subunit protein bS1 (rpsA) (Streptococcus pneumoniae (strain ATCC BAA-255 / R6)).